A 211-amino-acid chain; its full sequence is Uridine kinase (211 aa).

Position 12 to 19 (12 to 19 (GGSGSGKT)) interacts with ATP.

It belongs to the uridine kinase family.

It localises to the cytoplasm. The enzyme catalyses uridine + ATP = UMP + ADP + H(+). It carries out the reaction cytidine + ATP = CMP + ADP + H(+). It participates in pyrimidine metabolism; CTP biosynthesis via salvage pathway; CTP from cytidine: step 1/3. Its pathway is pyrimidine metabolism; UMP biosynthesis via salvage pathway; UMP from uridine: step 1/1. This Bacillus velezensis (strain DSM 23117 / BGSC 10A6 / LMG 26770 / FZB42) (Bacillus amyloliquefaciens subsp. plantarum) protein is Uridine kinase.